The chain runs to 85 residues: U4-theraphotoxin-Hhn1r (85 aa).

A signal peptide spans 1-22 (MKVTLIAILTCAAVLVLHTTAA). Residues 23–48 (EELEAESQLMEVGMPDTELAAVDEER) constitute a propeptide that is removed on maturation. Disulfide bonds link C52–C66, C56–C77, and C71–C82.

Belongs to the neurotoxin 12 (Hwtx-2) family. 02 (Hwtx-2) subfamily. In terms of tissue distribution, expressed by the venom gland.

It localises to the secreted. Functionally, postsynaptic neurotoxin. The protein is U4-theraphotoxin-Hhn1r of Cyriopagopus hainanus (Chinese bird spider).